We begin with the raw amino-acid sequence, 622 residues long: Chaperone protein HscA homolog (622 aa).

It belongs to the heat shock protein 70 family.

In terms of biological role, chaperone involved in the maturation of iron-sulfur cluster-containing proteins. Has a low intrinsic ATPase activity which is markedly stimulated by HscB. The protein is Chaperone protein HscA homolog of Delftia acidovorans (strain DSM 14801 / SPH-1).